Here is a 316-residue protein sequence, read N- to C-terminus: Aspartate carbamoyltransferase catalytic subunit (316 aa).

Carbamoyl phosphate-binding residues include arginine 66 and threonine 67. Position 94 (lysine 94) interacts with L-aspartate. 3 residues coordinate carbamoyl phosphate: arginine 116, histidine 146, and glutamine 149. 2 residues coordinate L-aspartate: arginine 180 and arginine 235. Carbamoyl phosphate-binding residues include glycine 276 and proline 277.

Belongs to the aspartate/ornithine carbamoyltransferase superfamily. ATCase family. In terms of assembly, heterododecamer (2C3:3R2) of six catalytic PyrB chains organized as two trimers (C3), and six regulatory PyrI chains organized as three dimers (R2).

The enzyme catalyses carbamoyl phosphate + L-aspartate = N-carbamoyl-L-aspartate + phosphate + H(+). It functions in the pathway pyrimidine metabolism; UMP biosynthesis via de novo pathway; (S)-dihydroorotate from bicarbonate: step 2/3. Its function is as follows. Catalyzes the condensation of carbamoyl phosphate and aspartate to form carbamoyl aspartate and inorganic phosphate, the committed step in the de novo pyrimidine nucleotide biosynthesis pathway. This Stenotrophomonas maltophilia (strain K279a) protein is Aspartate carbamoyltransferase catalytic subunit.